Consider the following 80-residue polypeptide: MFPLVKSALNRLQVRSIQQTMARQSHQKRTPDFHDKYGNAVLASGATFCIVTWTYVATQVGIEWNLSPVGRVTPKEWRNQ.

The transit peptide at 1-24 directs the protein to the mitochondrion; that stretch reads MFPLVKSALNRLQVRSIQQTMARQ. Residues 25 to 32 lie on the Mitochondrial matrix side of the membrane; it reads SHQKRTPD. A helical transmembrane segment spans residues 33-59; the sequence is FHDKYGNAVLASGATFCIVTWTYVATQ. At 60 to 80 the chain is on the mitochondrial intermembrane side; it reads VGIEWNLSPVGRVTPKEWRNQ.

The protein belongs to the cytochrome c oxidase VIIb family. In terms of assembly, component of the cytochrome c oxidase (complex IV, CIV), a multisubunit enzyme composed of 14 subunits. The complex is composed of a catalytic core of 3 subunits MT-CO1, MT-CO2 and MT-CO3, encoded in the mitochondrial DNA, and 11 supernumerary subunits COX4I1 (or COX4I2), COX5A, COX5B, COX6A1 (or COX6A2), COX6B1 (or COX6B2), COX6C, COX7A2 (or COX7A1), COX7B, COX7C, COX8A and NDUFA4, which are encoded in the nuclear genome. The complex exists as a monomer or a dimer and forms supercomplexes (SCs) in the inner mitochondrial membrane with NADH-ubiquinone oxidoreductase (complex I, CI) and ubiquinol-cytochrome c oxidoreductase (cytochrome b-c1 complex, complex III, CIII), resulting in different assemblies (supercomplex SCI(1)III(2)IV(1) and megacomplex MCI(2)III(2)IV(2)).

The protein resides in the mitochondrion inner membrane. Its pathway is energy metabolism; oxidative phosphorylation. In terms of biological role, component of the cytochrome c oxidase, the last enzyme in the mitochondrial electron transport chain which drives oxidative phosphorylation. The respiratory chain contains 3 multisubunit complexes succinate dehydrogenase (complex II, CII), ubiquinol-cytochrome c oxidoreductase (cytochrome b-c1 complex, complex III, CIII) and cytochrome c oxidase (complex IV, CIV), that cooperate to transfer electrons derived from NADH and succinate to molecular oxygen, creating an electrochemical gradient over the inner membrane that drives transmembrane transport and the ATP synthase. Cytochrome c oxidase is the component of the respiratory chain that catalyzes the reduction of oxygen to water. Electrons originating from reduced cytochrome c in the intermembrane space (IMS) are transferred via the dinuclear copper A center (CU(A)) of subunit 2 and heme A of subunit 1 to the active site in subunit 1, a binuclear center (BNC) formed by heme A3 and copper B (CU(B)). The BNC reduces molecular oxygen to 2 water molecules using 4 electrons from cytochrome c in the IMS and 4 protons from the mitochondrial matrix. Plays a role in proper central nervous system (CNS) development in vertebrates. In Homo sapiens (Human), this protein is Cytochrome c oxidase subunit 7B, mitochondrial (COX7B).